Reading from the N-terminus, the 234-residue chain is DEAD-box ATP-dependent RNA helicase 3 (234 aa).

Positions 120-148 (LAVSRLGLPQKLVETLEKRGITKLFPIQR) match the Q motif motif. One can recognise a Helicase ATP-binding domain in the interval 151–234 (LVPALEGRDI…RTVCVYGGVS (84 aa)). Position 164 to 171 (164 to 171 (AKTGTGKT)) interacts with ATP.

It belongs to the DEAD box helicase family. DDX21/DDX50 subfamily.

This Helianthus annuus (Common sunflower) protein is DEAD-box ATP-dependent RNA helicase 3.